A 132-amino-acid chain; its full sequence is Fatty acid-binding protein (132 aa).

Residues Arg107 and 127–129 (RNY) contribute to the (5Z,8Z,11Z,14Z)-eicosatetraenoate site. (9Z)-octadecenoate is bound by residues Arg107 and 127-129 (RNY).

This sequence belongs to the calycin superfamily. Fatty-acid binding protein (FABP) family.

The protein localises to the cytoplasm. May play a role in the transport of fatty acids. Binds to various fatty acids but not retinoids. The polypeptide is Fatty acid-binding protein (Schistosoma japonicum (Blood fluke)).